The following is a 67-amino-acid chain: DNA-directed RNA polymerase subunit omega (67 aa).

The protein belongs to the RNA polymerase subunit omega family. As to quaternary structure, the RNAP catalytic core consists of 2 alpha, 1 beta, 1 beta' and 1 omega subunit. When a sigma factor is associated with the core the holoenzyme is formed, which can initiate transcription.

The enzyme catalyses RNA(n) + a ribonucleoside 5'-triphosphate = RNA(n+1) + diphosphate. Functionally, promotes RNA polymerase assembly. Latches the N- and C-terminal regions of the beta' subunit thereby facilitating its interaction with the beta and alpha subunits. This is DNA-directed RNA polymerase subunit omega from Polaromonas sp. (strain JS666 / ATCC BAA-500).